The primary structure comprises 578 residues: CTP synthase (578 aa).

In terms of domain architecture, Glutamine amidotransferase type-1 spans 305–559 (KIALVGKYTN…LGLVAASSGI (255 aa)). Residues Cys404, His535, and Glu537 each act as for GATase activity in the active site.

It belongs to the CTP synthase family.

The enzyme catalyses UTP + L-glutamine + ATP + H2O = CTP + L-glutamate + ADP + phosphate + 2 H(+). The protein operates within pyrimidine metabolism; CTP biosynthesis via de novo pathway; CTP from UDP: step 2/2. In terms of biological role, catalyzes the ATP-dependent amination of UTP to CTP with either L-glutamine or ammonia as the source of nitrogen. The sequence is that of CTP synthase (URA7) from Candida glabrata (strain ATCC 2001 / BCRC 20586 / JCM 3761 / NBRC 0622 / NRRL Y-65 / CBS 138) (Yeast).